Here is a 297-residue protein sequence, read N- to C-terminus: HTH-type transcriptional regulator ArgP (297 aa).

Residues 4–60 form the HTH lysR-type domain; sequence PDYRTLQALDAVIRERGFERAAQKLCITQSAVSQRIKQLENMFGQPLLVRTVPPRPT. Residues 21 to 40 constitute a DNA-binding region (H-T-H motif); that stretch reads FERAAQKLCITQSAVSQRIK.

It belongs to the LysR transcriptional regulatory family. As to quaternary structure, homodimer.

Its function is as follows. Controls the transcription of genes involved in arginine and lysine metabolism. This Escherichia coli O7:K1 (strain IAI39 / ExPEC) protein is HTH-type transcriptional regulator ArgP.